The following is a 1572-amino-acid chain: Helicase SWR1 (1572 aa).

Disordered regions lie at residues 61–94, 119–291, and 304–323; these read SLEQ…DKNN, CGRR…SLNT, and TSSS…QKKS. 2 stretches are compositionally biased toward polar residues: residues 82–94 and 152–173; these read ISGT…DKNN and TVVT…SSPK. The span at 179-192 shows a compositional bias: basic and acidic residues; it reads TADKKSKLNKRDSS. Residues 216–232 are compositionally biased toward basic residues; it reads SKARLKSSKAKSKKRAV. Residues 238-269 are compositionally biased toward basic and acidic residues; sequence LVRKQSPEIKNESKRTKADPTHTNDDGNDNRK. Over residues 282–291 the composition is skewed to polar residues; sequence ESGLKTSLNT. The HSA domain maps to 424–496; it reads ISVYYKEQSK…EEKRKKNLAR (73 aa). Disordered stretches follow at residues 555–604, 624–675, and 694–749; these read TYPS…GNDM, FGNE…PGLS, and FDAD…AADP. Positions 558–568 are enriched in low complexity; sequence SEASDASSEFS. The span at 569 to 583 shows a compositional bias: acidic residues; that stretch reads ANEESDGNSDIDDEM. Over residues 590 to 602 the composition is skewed to basic and acidic residues; the sequence is DSDKEGNTERIGN. Residues 643 to 657 are compositionally biased toward low complexity; the sequence is DSVSDSMEDSLSSSE. Residues 694-705 are compositionally biased toward acidic residues; sequence FDADSSSDDGLD. Residues 726 to 737 show a composition bias toward basic and acidic residues; that stretch reads SDNELKDEKAET. Residues 777–942 enclose the Helicase ATP-binding domain; sequence ASLYNNKTNG…WSLLYFLMPQ (166 aa). 790 to 797 provides a ligand contact to ATP; it reads DEMGLGKT. The DEAH box signature appears at 893–896; the sequence is DEAH. Residues 1314-1464 form the Helicase C-terminal domain; the sequence is KLAQLLQNLK…NVVIQTGDFT (151 aa). The disordered stretch occupies residues 1505–1556; that stretch reads AEDEDDAKAAKSALREVNVDNEDFQEGSVAAQDGNSDNENNEDSEDEYGGTS. Over residues 1511–1522 the composition is skewed to basic and acidic residues; the sequence is AKAAKSALREVN. The segment covering 1543 to 1552 has biased composition (acidic residues); it reads ENNEDSEDEY.

This sequence belongs to the SNF2/RAD54 helicase family. SWR1 subfamily. In terms of assembly, component of the SWR1 chromatin-remodeling complex.

It localises to the nucleus. It carries out the reaction ATP + H2O = ADP + phosphate + H(+). Its function is as follows. Catalytic component of the SWR1 complex which mediates the ATP-dependent exchange of histone H2A for the H2A variant HZT1 leading to transcriptional regulation of selected genes by chromatin remodeling. In Kluyveromyces lactis (strain ATCC 8585 / CBS 2359 / DSM 70799 / NBRC 1267 / NRRL Y-1140 / WM37) (Yeast), this protein is Helicase SWR1 (SWR1).